The chain runs to 122 residues: Large ribosomal subunit protein uL14 (122 aa).

Belongs to the universal ribosomal protein uL14 family. Part of the 50S ribosomal subunit. Forms a cluster with proteins L3 and L19. In the 70S ribosome, L14 and L19 interact and together make contacts with the 16S rRNA in bridges B5 and B8.

Functionally, binds to 23S rRNA. Forms part of two intersubunit bridges in the 70S ribosome. In Halorhodospira halophila (strain DSM 244 / SL1) (Ectothiorhodospira halophila (strain DSM 244 / SL1)), this protein is Large ribosomal subunit protein uL14.